The chain runs to 133 residues: MPSINPLANALATLYNNEMRRNKQALITPASKLIISVLRVMQKEGYIGEFEYIDDGRAGKIIVQLLGRINKCGPISPRYPLDYNGLLRLPDYIRKYLPSKEIGIIIISTPKGVMSHRDGIREKIGGVTLGYVY.

It belongs to the universal ribosomal protein uS8 family. In terms of assembly, part of the 30S ribosomal subunit.

Functionally, one of the primary rRNA binding proteins, it binds directly to 16S rRNA central domain where it helps coordinate assembly of the platform of the 30S subunit. This is Small ribosomal subunit protein uS8 from Sulfolobus acidocaldarius (strain ATCC 33909 / DSM 639 / JCM 8929 / NBRC 15157 / NCIMB 11770).